Consider the following 275-residue polypeptide: Formamidopyrimidine-DNA glycosylase (275 aa).

Pro-2 acts as the Schiff-base intermediate with DNA in catalysis. Residue Glu-3 is the Proton donor of the active site. Catalysis depends on Lys-59, which acts as the Proton donor; for beta-elimination activity. Residues His-92, Arg-111, and Arg-155 each coordinate DNA. The segment at 240–274 (NVYGRAGKACPKCGTTIEKQVLGQRSSYYCPQCQR) adopts an FPG-type zinc-finger fold. Arg-264 (proton donor; for delta-elimination activity) is an active-site residue.

The protein belongs to the FPG family. Monomer. Zn(2+) is required as a cofactor.

The enzyme catalyses Hydrolysis of DNA containing ring-opened 7-methylguanine residues, releasing 2,6-diamino-4-hydroxy-5-(N-methyl)formamidopyrimidine.. It catalyses the reaction 2'-deoxyribonucleotide-(2'-deoxyribose 5'-phosphate)-2'-deoxyribonucleotide-DNA = a 3'-end 2'-deoxyribonucleotide-(2,3-dehydro-2,3-deoxyribose 5'-phosphate)-DNA + a 5'-end 5'-phospho-2'-deoxyribonucleoside-DNA + H(+). Functionally, involved in base excision repair of DNA damaged by oxidation or by mutagenic agents. Acts as a DNA glycosylase that recognizes and removes damaged bases. Has a preference for oxidized purines, such as 7,8-dihydro-8-oxoguanine (8-oxoG). Has AP (apurinic/apyrimidinic) lyase activity and introduces nicks in the DNA strand. Cleaves the DNA backbone by beta-delta elimination to generate a single-strand break at the site of the removed base with both 3'- and 5'-phosphates. The protein is Formamidopyrimidine-DNA glycosylase of Magnetococcus marinus (strain ATCC BAA-1437 / JCM 17883 / MC-1).